The primary structure comprises 140 residues: Bacilliredoxin STH2395 (140 aa).

It belongs to the bacilliredoxin family.

The chain is Bacilliredoxin STH2395 from Symbiobacterium thermophilum (strain DSM 24528 / JCM 14929 / IAM 14863 / T).